The chain runs to 688 residues: PTS system glucoside-specific EIICBA component (688 aa).

Residues 3-427 (KKLFGQLQRI…FKLKTPGRED (425 aa)) form the PTS EIIC type-1 domain. Transmembrane regions (helical) follow at residues 12–32 (IGKA…LLAF), 81–101 (LGLA…YLIM), 137–157 (LVLG…MGAL), 182–202 (FVPI…SFAW), 223–243 (LTTF…LHHI), 284–304 (AFTT…AFAI), 315–335 (IVGG…ITEP), 340–360 (FLFV…TSFL), 364–384 (LLGV…ILYG), and 395–415 (LVIP…DFAI). The PTS EIIB type-1 domain occupies 438–519 (AKLPFDVLDA…AKIMSGEITK (82 aa)). Residue C460 is the Phosphocysteine intermediate; for EIIB activity of the active site. One can recognise a PTS EIIA type-1 domain in the interval 560-664 (DQVFAGKMMG…SIVTPMIITN (105 aa)). The active-site Tele-phosphohistidine intermediate; for EIIA activity is H612.

The protein resides in the cell membrane. In terms of biological role, the phosphoenolpyruvate-dependent sugar phosphotransferase system (sugar PTS), a major carbohydrate active -transport system, catalyzes the phosphorylation of incoming sugar substrates concomitantly with their translocation across the cell membrane. This system is involved in alpha- and beta-glucoside transport. The protein is PTS system glucoside-specific EIICBA component (glcB) of Staphylococcus aureus (strain MRSA252).